We begin with the raw amino-acid sequence, 434 residues long: Nicotinate phosphoribosyltransferase (434 aa).

His-242 carries the phosphohistidine; by autocatalysis modification.

The protein belongs to the NAPRTase family. In terms of processing, transiently phosphorylated on a His residue during the reaction cycle. Phosphorylation strongly increases the affinity for substrates and increases the rate of nicotinate D-ribonucleotide production. Dephosphorylation regenerates the low-affinity form of the enzyme, leading to product release.

It catalyses the reaction nicotinate + 5-phospho-alpha-D-ribose 1-diphosphate + ATP + H2O = nicotinate beta-D-ribonucleotide + ADP + phosphate + diphosphate. The protein operates within cofactor biosynthesis; NAD(+) biosynthesis; nicotinate D-ribonucleotide from nicotinate: step 1/1. In terms of biological role, catalyzes the synthesis of beta-nicotinate D-ribonucleotide from nicotinate and 5-phospho-D-ribose 1-phosphate at the expense of ATP. The chain is Nicotinate phosphoribosyltransferase from Allorhizobium ampelinum (strain ATCC BAA-846 / DSM 112012 / S4) (Agrobacterium vitis (strain S4)).